Reading from the N-terminus, the 325-residue chain is ATP phosphoribosyltransferase (325 aa).

This sequence belongs to the ATP phosphoribosyltransferase family. Long subfamily. It depends on Mg(2+) as a cofactor.

The protein resides in the cytoplasm. It carries out the reaction 1-(5-phospho-beta-D-ribosyl)-ATP + diphosphate = 5-phospho-alpha-D-ribose 1-diphosphate + ATP. Its pathway is amino-acid biosynthesis; L-histidine biosynthesis; L-histidine from 5-phospho-alpha-D-ribose 1-diphosphate: step 1/9. With respect to regulation, feedback inhibited by histidine. Its function is as follows. Catalyzes the condensation of ATP and 5-phosphoribose 1-diphosphate to form N'-(5'-phosphoribosyl)-ATP (PR-ATP). Has a crucial role in the pathway because the rate of histidine biosynthesis seems to be controlled primarily by regulation of HisG enzymatic activity. This is ATP phosphoribosyltransferase from Bradyrhizobium diazoefficiens (strain JCM 10833 / BCRC 13528 / IAM 13628 / NBRC 14792 / USDA 110).